Here is a 221-residue protein sequence, read N- to C-terminus: MKKAVVLLSGGMDSAAVIAMAQEQGFAVHALSVRYGQRHTSELDAAARVAKAQGVIAHKTVDVDLRSIGGSALTDDIDVPEAGGAGIPVTYVPARNTIMLSLALGWAEVLGANDIFCGVNAVDYSGYPDCRPEFVAAFQALANLATKSGVEGAGIKVHAPLQFLSKGQIVSEGVRLGVDFGLTVSCYNADANGAACSHCDACRLRAQGFTEAGVADPTLYA.

An ATP-binding site is contributed by 8–18 (LSGGMDSAAVI). Zn(2+) is bound by residues C186, C196, C199, and C202.

Belongs to the QueC family. Zn(2+) serves as cofactor.

The catalysed reaction is 7-carboxy-7-deazaguanine + NH4(+) + ATP = 7-cyano-7-deazaguanine + ADP + phosphate + H2O + H(+). The protein operates within purine metabolism; 7-cyano-7-deazaguanine biosynthesis. Functionally, catalyzes the ATP-dependent conversion of 7-carboxy-7-deazaguanine (CDG) to 7-cyano-7-deazaguanine (preQ(0)). This Stenotrophomonas maltophilia (strain R551-3) protein is 7-cyano-7-deazaguanine synthase.